The sequence spans 386 residues: Flap endonuclease 1 (386 aa).

Positions 1-104 are N-domain; the sequence is MGILGLSKLI…GELAKRAERR (104 aa). Asp-34 is a Mg(2+) binding site. DNA-binding residues include Arg-47 and Arg-70. Asp-86, Glu-158, Glu-160, Asp-179, and Asp-181 together coordinate Mg(2+). An I-domain region spans residues 122-253; that stretch reads EIEKFNRRLV…KRAIELINNY (132 aa). DNA is bound at residue Glu-158. Positions 231 and 233 each coordinate DNA. Asp-233 contributes to the Mg(2+) binding site. The tract at residues 336 to 344 is interaction with PCNA; the sequence is TQVRLDSFF. Residues 354 to 386 form a disordered region; that stretch reads VNAAKRKAEEAKKSANNKKAKTSGGAARGRRPK.

It belongs to the XPG/RAD2 endonuclease family. FEN1 subfamily. Interacts with PCNA. Three molecules of FEN1 bind to one PCNA trimer with each molecule binding to one PCNA monomer. PCNA stimulates the nuclease activity without altering cleavage specificity. The cofactor is Mg(2+). Post-translationally, phosphorylated. Phosphorylation upon DNA damage induces relocalization to the nuclear plasma.

The protein localises to the nucleus. It localises to the nucleolus. The protein resides in the nucleoplasm. It is found in the mitochondrion. Functionally, structure-specific nuclease with 5'-flap endonuclease and 5'-3' exonuclease activities involved in DNA replication and repair. During DNA replication, cleaves the 5'-overhanging flap structure that is generated by displacement synthesis when DNA polymerase encounters the 5'-end of a downstream Okazaki fragment. It enters the flap from the 5'-end and then tracks to cleave the flap base, leaving a nick for ligation. Also involved in the long patch base excision repair (LP-BER) pathway, by cleaving within the apurinic/apyrimidinic (AP) site-terminated flap. Acts as a genome stabilization factor that prevents flaps from equilibrating into structures that lead to duplications and deletions. Also possesses 5'-3' exonuclease activity on nicked or gapped double-stranded DNA, and exhibits RNase H activity. Also involved in replication and repair of rDNA and in repairing mitochondrial DNA. This chain is Flap endonuclease 1, found in Drosophila pseudoobscura pseudoobscura (Fruit fly).